Reading from the N-terminus, the 234-residue chain is Triosephosphate isomerase (234 aa).

8–10 lines the substrate pocket; that stretch reads NFK. The active-site Electrophile is histidine 90. Glutamate 159 serves as the catalytic Proton acceptor. 2 residues coordinate substrate: glycine 165 and serine 197.

This sequence belongs to the triosephosphate isomerase family. Homodimer.

It localises to the cytoplasm. It catalyses the reaction D-glyceraldehyde 3-phosphate = dihydroxyacetone phosphate. It participates in carbohydrate biosynthesis; gluconeogenesis. Its pathway is carbohydrate degradation; glycolysis; D-glyceraldehyde 3-phosphate from glycerone phosphate: step 1/1. Involved in the gluconeogenesis. Catalyzes stereospecifically the conversion of dihydroxyacetone phosphate (DHAP) to D-glyceraldehyde-3-phosphate (G3P). The sequence is that of Triosephosphate isomerase from Helicobacter pylori (strain G27).